The chain runs to 113 residues: Large ribosomal subunit protein bL17 (113 aa).

Belongs to the bacterial ribosomal protein bL17 family. As to quaternary structure, part of the 50S ribosomal subunit. Contacts protein L32.

The sequence is that of Large ribosomal subunit protein bL17 from Clostridioides difficile (strain 630) (Peptoclostridium difficile).